Reading from the N-terminus, the 356-residue chain is Xylose/arabinose import permease protein XylH (356 aa).

10 helical membrane passes run 14–34, 41–61, 70–90, 96–116, 126–146, 161–181, 211–231, 242–262, 266–286, and 287–307; these read LFLV…AYFS, IFQY…LMLC, ALAN…YQAI, IVVS…MNGL, LITT…YSGG, VSIL…LILL, VKII…IIQG, FTAD…TSLV, GSLV…NGFN, and ILGI…VVVM.

It belongs to the binding-protein-dependent transport system permease family. In terms of assembly, the complex is composed of two ATP-binding proteins (XylG), two transmembrane proteins (XylH) and a solute-binding protein (XylF).

It localises to the cell membrane. Its function is as follows. Part of the ABC transporter complex XylFGH involved in the uptake of xylose and arabinose. Responsible for the translocation of the substrate across the membrane. The polypeptide is Xylose/arabinose import permease protein XylH (Sulfolobus acidocaldarius (strain ATCC 33909 / DSM 639 / JCM 8929 / NBRC 15157 / NCIMB 11770)).